The sequence spans 519 residues: O-fucosyltransferase 31 (519 aa).

Residues 18 to 38 (ALAGVFVLLFPILYPNLFSPL) traverse the membrane as a helical; Signal-anchor for type II membrane protein segment. N-linked (GlcNAc...) asparagine glycosylation occurs at asparagine 131. A substrate-binding site is contributed by 302 to 304 (HLR). Asparagine 373 and asparagine 474 each carry an N-linked (GlcNAc...) asparagine glycan.

This sequence belongs to the glycosyltransferase GT106 family.

The protein resides in the membrane. The protein operates within glycan metabolism. The chain is O-fucosyltransferase 31 from Arabidopsis thaliana (Mouse-ear cress).